Here is a 78-residue protein sequence, read N- to C-terminus: Translation initiation factor IF-1, chloroplastic (78 aa).

The region spanning 1-72 is the S1-like domain; the sequence is MEKQNLIDME…TKGRITYRLR (72 aa).

The protein belongs to the IF-1 family. Component of the 30S ribosomal translation pre-initiation complex which assembles on the 30S ribosome in the order IF-2 and IF-3, IF-1 and N-formylmethionyl-tRNA(fMet); mRNA recruitment can occur at any time during PIC assembly.

It is found in the plastid. Its subcellular location is the chloroplast. One of the essential components for the initiation of protein synthesis. Stabilizes the binding of IF-2 and IF-3 on the 30S subunit to which N-formylmethionyl-tRNA(fMet) subsequently binds. Helps modulate mRNA selection, yielding the 30S pre-initiation complex (PIC). Upon addition of the 50S ribosomal subunit IF-1, IF-2 and IF-3 are released leaving the mature 70S translation initiation complex. This Anthoceros angustus (Hornwort) protein is Translation initiation factor IF-1, chloroplastic.